The following is a 123-amino-acid chain: Large ribosomal subunit protein bL12 (123 aa).

The protein belongs to the bacterial ribosomal protein bL12 family. Homodimer. Part of the ribosomal stalk of the 50S ribosomal subunit. Forms a multimeric L10(L12)X complex, where L10 forms an elongated spine to which 2 to 4 L12 dimers bind in a sequential fashion. Binds GTP-bound translation factors.

In terms of biological role, forms part of the ribosomal stalk which helps the ribosome interact with GTP-bound translation factors. Is thus essential for accurate translation. In Rhodopseudomonas palustris (strain BisA53), this protein is Large ribosomal subunit protein bL12.